The sequence spans 601 residues: Sulfite reductase [NADPH] flavoprotein alpha-component (601 aa).

The Flavodoxin-like domain maps to 64–202 (ITLISASQTG…SAQQWRQQIV (139 aa)). Residues 70–75 (SQTGNA), 117–120 (STQG), and 153–162 (LGDTSYEHFC) each bind FMN. The region spanning 236 to 450 (AAPLTAQLSV…IEHNDNFRLP (215 aa)) is the FAD-binding FR-type domain. FAD contacts are provided by residues threonine 324, lysine 358, 388–391 (RLYS), 406–408 (TVG), tyrosine 412, and 421–424 (GGAS). NADP(+) is bound by residues 521–522 (SR), 527–531 (KIYVQ), and aspartate 563. Position 601 (tyrosine 601) interacts with FAD.

Belongs to the NADPH-dependent sulphite reductase flavoprotein subunit CysJ family. It in the N-terminal section; belongs to the flavodoxin family. This sequence in the C-terminal section; belongs to the flavoprotein pyridine nucleotide cytochrome reductase family. In terms of assembly, alpha(8)-beta(8). The alpha component is a flavoprotein, the beta component is a hemoprotein. FAD serves as cofactor. The cofactor is FMN.

The enzyme catalyses hydrogen sulfide + 3 NADP(+) + 3 H2O = sulfite + 3 NADPH + 4 H(+). It participates in sulfur metabolism; hydrogen sulfide biosynthesis; hydrogen sulfide from sulfite (NADPH route): step 1/1. Component of the sulfite reductase complex that catalyzes the 6-electron reduction of sulfite to sulfide. This is one of several activities required for the biosynthesis of L-cysteine from sulfate. The flavoprotein component catalyzes the electron flow from NADPH -&gt; FAD -&gt; FMN to the hemoprotein component. This is Sulfite reductase [NADPH] flavoprotein alpha-component from Yersinia enterocolitica serotype O:8 / biotype 1B (strain NCTC 13174 / 8081).